Reading from the N-terminus, the 180-residue chain is Large ribosomal subunit protein uL5 (180 aa).

It belongs to the universal ribosomal protein uL5 family. As to quaternary structure, part of the 50S ribosomal subunit; part of the 5S rRNA/L5/L18/L25 subcomplex. Contacts the 5S rRNA and the P site tRNA. Forms a bridge to the 30S subunit in the 70S ribosome.

This is one of the proteins that bind and probably mediate the attachment of the 5S RNA into the large ribosomal subunit, where it forms part of the central protuberance. In the 70S ribosome it contacts protein S13 of the 30S subunit (bridge B1b), connecting the 2 subunits; this bridge is implicated in subunit movement. Contacts the P site tRNA; the 5S rRNA and some of its associated proteins might help stabilize positioning of ribosome-bound tRNAs. This chain is Large ribosomal subunit protein uL5, found in Latilactobacillus sakei subsp. sakei (strain 23K) (Lactobacillus sakei subsp. sakei).